Here is a 397-residue protein sequence, read N- to C-terminus: Golgi-associated RAB2 interactor protein 2 (397 aa).

Disordered stretches follow at residues 1-24 (MKKS…PDSK) and 342-397 (QTTL…KLLN). 3 stretches are compositionally biased toward basic and acidic residues: residues 10–24 (TRID…PDSK), 353–369 (EKSK…RTMD), and 376–397 (KAEE…KLLN).

The protein belongs to the GARIN family. Interacts with CALM1.

The protein resides in the cell projection. Its subcellular location is the cilium. It is found in the flagellum. Its function is as follows. Seems to play a role in sperm motility. The protein is Golgi-associated RAB2 interactor protein 2 (GARIN2) of Bos taurus (Bovine).